The following is a 603-amino-acid chain: Pentatricopeptide repeat-containing protein At2g02980, chloroplastic (603 aa).

The N-terminal 38 residues, 1-38 (MAISSASLISSFSHAETFTKHSKIDTVNTQNPILLISK), are a transit peptide targeting the chloroplast. PPR repeat units lie at residues 93–127 (DIVI…GILP), 128–162 (DNYT…GLDD), 163–193 (NVYV…IVEP), 194–228 (CVVC…YLKP), 229–263 (NEIT…SFCK), 264–294 (YVKV…MRYK), 295–329 (DTQA…NVQP), 330–365 (DEIT…GIVP), 366–400 (SIKH…PTPM), and 432–466 (HGGD…KAVK). Residues 401 to 476 (LWRILLAACS…VPGCSSIEVN (76 aa)) are type E motif. Residues 477 to 507 (NVVHEFFSGDGVKSATTKLHRALDEMVKELK) are type E(+) motif. Residues 508–603 (LSGYVPDTSM…DGKCSCGDFW (96 aa)) form a type DYW motif region.

Belongs to the PPR family. PCMP-H subfamily.

Its subcellular location is the plastid. It is found in the chloroplast. Involved in RNA editing event in chloroplasts. Required for the editing of a single site in ndhD transcript, which is a plastid-encoded subunits of the chloroplast NAD(P)H dehydrogenase (NDH) complex. Not essential for the activity of the NDH complex of the photosynthetic electron transport chain. This Arabidopsis thaliana (Mouse-ear cress) protein is Pentatricopeptide repeat-containing protein At2g02980, chloroplastic (PCMP-H26).